The sequence spans 360 residues: Peptide chain release factor 1 (360 aa).

An N5-methylglutamine modification is found at Q235. Residues R284–R303 form a disordered region.

It belongs to the prokaryotic/mitochondrial release factor family. In terms of processing, methylated by PrmC. Methylation increases the termination efficiency of RF1.

The protein localises to the cytoplasm. Functionally, peptide chain release factor 1 directs the termination of translation in response to the peptide chain termination codons UAG and UAA. In Bordetella avium (strain 197N), this protein is Peptide chain release factor 1.